A 499-amino-acid chain; its full sequence is MVVLSTLALVRAAYSLNSFVFEAEDIRFGSPWWFVVVGVACFLVLFAGIMSGLTLGLMSLGLVELEILQQSGSSAEKKQAAAILPVVKKQHQLLVTLLLCNAAAMEALPICLDKIFHPFVAVLLSVTFVLAFGEIIPQAICSRYGLAVGANFLWLVRILMIICYPIAYPIGKVLDAVIGHNDTLFRRAQLKALVSIHSQEAGKGGELTHEETMIISGALDLSQKTAEEAMTPIESTFSLDVNTKLDWETIGKILSRGHSRIPVYLGNPKNIIGLLLVKSLLTVRAETEAPVSSVSIRKIPRVPSDMPLYDILNEFQKGSSHMAAVVKVKDKDKKNNMQLLSNGETPKENMKFYQSSNLTAPLLKHESHDVVVDIDKVPKHVKNRGRNFQQNGTVTRDLPCLLEDNEDAEVIGIITLEDVFEELLQAEIVDETDVYIDVHKRVRVAAAAAAAVSSITRASPAEIQSKVGQTVKKLVGKEARGTKNYTTKITEPLLAESDR.

Residues 1–32 (MVVLSTLALVRAAYSLNSFVFEAEDIRFGSPW) lie on the Extracellular side of the membrane. The 183-residue stretch at 29-211 (GSPWWFVVVG…GKGGELTHEE (183 aa)) folds into the CNNM transmembrane domain. Residues 33-53 (WFVVVGVACFLVLFAGIMSGL) form a helical membrane-spanning segment. Topologically, residues 54–91 (TLGLMSLGLVELEILQQSGSSAEKKQAAAILPVVKKQH) are cytoplasmic. The chain crosses the membrane as a helical span at residues 92-112 (QLLVTLLLCNAAAMEALPICL). Residues 113–114 (DK) lie on the Extracellular side of the membrane. A helical transmembrane segment spans residues 115–135 (IFHPFVAVLLSVTFVLAFGEI). Residues 136 to 145 (IPQAICSRYG) lie on the Cytoplasmic side of the membrane. The helical transmembrane segment at 146–166 (LAVGANFLWLVRILMIICYPI) threads the bilayer. The Extracellular portion of the chain corresponds to 167-499 (AYPIGKVLDA…TEPLLAESDR (333 aa)). N-linked (GlcNAc...) asparagine glycosylation occurs at Asn-181. CBS domains are found at residues 230-291 (MTPI…EAPV), 295-359 (SIRK…SNLT), and 365-431 (HESH…IVDE). Residues Asn-357, Asn-391, and Asn-484 are each glycosylated (N-linked (GlcNAc...) asparagine).

It is found in the membrane. The polypeptide is Putative DUF21 domain-containing protein At1g03270 (CBSDUF4) (Arabidopsis thaliana (Mouse-ear cress)).